Consider the following 686-residue polypeptide: Phosphatidylinositol 4,5-bisphosphate-binding protein SLM1 (686 aa).

The segment at 33-147 (RSMTSADHAN…KQLQGKNSLT (115 aa)) is disordered. Positions 45-63 (QQQQQQQQQQQQQQQQQQQ) are enriched in low complexity. Positions 64–126 (SASFQNGSLT…PNIDSNTNVT (63 aa)) are enriched in polar residues. Over residues 133 to 144 (NNNNGKQLQGKN) the composition is skewed to low complexity. Phosphoserine is present on residues S145, S150, and S153. Residues 157–172 (SSLQRQRLAQQQQQQQ) show a composition bias toward low complexity. Positions 157–176 (SSLQRQRLAQQQQQQQDPRS) are disordered. Residues 296 to 381 (RLEDLRRDLI…FLHEAFDNLE (86 aa)) are a coiled coil. A PH domain is found at 468-581 (YEIKSGFLER…WFDNLKILTS (114 aa)). The segment at 626-669 (VENDENDDINSNYVGSTVTPKLDNQTNTNTSMSSLPDTNDSELQ) is disordered. Residues 634 to 663 (INSNYVGSTVTPKLDNQTNTNTSMSSLPDT) are compositionally biased toward polar residues. The short motif at 673–678 (PNIYIQ) is the PXIXIT-like, required for interaction with CNA1 and CNA2, and calcineurin-dependent dephosphorylation element.

As to quaternary structure, heterodimer of SLM1-SLM2. Binds phosphatidylinositol 4,5-bisphosphate, which is required for function. Interacts with the TORC2 subunits AVO2, BIT61 and TOR2. Interacts with the calcineurin catalytic subunits CNA1 and CNA2. In terms of processing, phosphorylated by the target of rapamycin complex 2 (TORC2) and dephosphorylated by serine/threonine-protein phosphatase 2B (calcineurin). Dephosphorylated in response to the disruption or inhibition of sphingolipid synthesis.

It is found in the cell membrane. Its function is as follows. Together with SLM2, acts as an effector of the TORC2- and calcineurin-signaling pathways. Phosphorylated and activated by TORC2 under favorable growth conditions. Mediates actin polarization via inhibition of calcineurin-dependent transcription. Upon nutrient limitation or environmental stress, gets dephosphorylated by calcineurin. Dephosphorylation inhibits its interaction with TORC2, thereby antagonizing TORC2 signaling and mediating calcineurin-dependent actin depolarization. May play a role in the response to the disruption of sphingolipid synthesis, where dephosphorylation of SLM1 leads to the activation and phosphorylation of YPK1 through the TORC2 and PKH1 pathways, which in turn phosphorylates ORM1 and LAG1 to activate sphingolipid synthesis. Also functions in heat-induced, calcineurin-mediated uracil permease (FUR4) endocytosis. The sequence is that of Phosphatidylinositol 4,5-bisphosphate-binding protein SLM1 (SLM1) from Saccharomyces cerevisiae (strain ATCC 204508 / S288c) (Baker's yeast).